The primary structure comprises 217 residues: Serine acetyltransferase (217 aa).

This sequence belongs to the transferase hexapeptide repeat family.

The protein localises to the cytoplasm. It catalyses the reaction L-serine + acetyl-CoA = O-acetyl-L-serine + CoA. Its pathway is amino-acid biosynthesis; L-cysteine biosynthesis; L-cysteine from L-serine: step 1/2. Its activity is regulated as follows. Inhibited by cysteine. In terms of biological role, catalyzes the acetylation of serine by acetyl-CoA to produce O-acetylserine (OAS). The chain is Serine acetyltransferase (cysE) from Bacillus subtilis (strain 168).